We begin with the raw amino-acid sequence, 337 residues long: Alanine racemase (337 aa).

Catalysis depends on lysine 33, which acts as the Proton acceptor; specific for D-alanine. Position 33 is an N6-(pyridoxal phosphate)lysine (lysine 33). Arginine 118 provides a ligand contact to substrate. Tyrosine 246 serves as the catalytic Proton acceptor; specific for L-alanine. Residue methionine 292 coordinates substrate.

This sequence belongs to the alanine racemase family. Requires pyridoxal 5'-phosphate as cofactor.

The enzyme catalyses L-alanine = D-alanine. It functions in the pathway amino-acid biosynthesis; D-alanine biosynthesis; D-alanine from L-alanine: step 1/1. Functionally, catalyzes the interconversion of L-alanine and D-alanine. May also act on other amino acids. The chain is Alanine racemase (alr) from Campylobacter concisus (strain 13826).